Reading from the N-terminus, the 799-residue chain is Histidine biosynthesis trifunctional protein (799 aa).

Residues 1-229 (MVLPILPLID…FIVEQENVGF (229 aa)) are phosphoribosyl-AMP cyclohydrolase. Residues 230–312 (CHLETMSCFG…FYFALAKLVA (83 aa)) are phosphoribosyl-ATP pyrophosphohydrolase. Residues 313–799 (NDVSLKDVEN…KLGLIPKDFQ (487 aa)) are histidinol dehydrogenase. Residues Gln-618 and His-621 each coordinate Zn(2+). Catalysis depends on residues Glu-687 and His-688. Positions 721 and 780 each coordinate Zn(2+).

In the C-terminal section; belongs to the histidinol dehydrogenase family. The cofactor is Zn(2+).

It carries out the reaction 1-(5-phospho-beta-D-ribosyl)-5'-AMP + H2O = 1-(5-phospho-beta-D-ribosyl)-5-[(5-phospho-beta-D-ribosylamino)methylideneamino]imidazole-4-carboxamide. The enzyme catalyses 1-(5-phospho-beta-D-ribosyl)-ATP + H2O = 1-(5-phospho-beta-D-ribosyl)-5'-AMP + diphosphate + H(+). It catalyses the reaction L-histidinol + 2 NAD(+) + H2O = L-histidine + 2 NADH + 3 H(+). Its pathway is amino-acid biosynthesis; L-histidine biosynthesis; L-histidine from 5-phospho-alpha-D-ribose 1-diphosphate: step 2/9. The protein operates within amino-acid biosynthesis; L-histidine biosynthesis; L-histidine from 5-phospho-alpha-D-ribose 1-diphosphate: step 3/9. It functions in the pathway amino-acid biosynthesis; L-histidine biosynthesis; L-histidine from 5-phospho-alpha-D-ribose 1-diphosphate: step 9/9. This chain is Histidine biosynthesis trifunctional protein, found in Saccharomyces cerevisiae (strain ATCC 204508 / S288c) (Baker's yeast).